Reading from the N-terminus, the 268-residue chain is Undecaprenyl-diphosphatase (268 aa).

7 consecutive transmembrane segments (helical) span residues 43–63, 83–103, 109–129, 144–164, 184–204, 218–238, and 246–266; these read FWNT…VVIY, FVIG…IAGK, LFNP…LMWV, FPLP…IPGV, AAEF…AYDF, IVAI…KAFL, and FTFF…ALAL.

This sequence belongs to the UppP family.

It localises to the cell inner membrane. The catalysed reaction is di-trans,octa-cis-undecaprenyl diphosphate + H2O = di-trans,octa-cis-undecaprenyl phosphate + phosphate + H(+). Catalyzes the dephosphorylation of undecaprenyl diphosphate (UPP). Confers resistance to bacitracin. The polypeptide is Undecaprenyl-diphosphatase (Nitrobacter hamburgensis (strain DSM 10229 / NCIMB 13809 / X14)).